We begin with the raw amino-acid sequence, 329 residues long: Very long chain fatty acid elongase 7 (329 aa).

7 helical membrane-spanning segments follow: residues 26-46 (YPLM…AYIV), 66-86 (LIVY…ESCI), 114-134 (GCWW…FFVM), 146-166 (VIHH…TPGG), 170-190 (FFGF…MLAA), 205-225 (LTVM…QLFF), and 233-253 (IGFA…FSNF).

This sequence belongs to the ELO family.

It localises to the membrane. The enzyme catalyses a very-long-chain acyl-CoA + malonyl-CoA + H(+) = a very-long-chain 3-oxoacyl-CoA + CO2 + CoA. In terms of biological role, catalyzes the first and rate-limiting reaction of the four reactions that constitute the long-chain fatty acids elongation cycle. This endoplasmic reticulum-bound enzymatic process allows the addition of 2 carbons to the chain of long- and very long-chain fatty acids (VLCFAs) per cycle. This chain is Very long chain fatty acid elongase 7, found in Drosophila melanogaster (Fruit fly).